A 689-amino-acid chain; its full sequence is Pyocin-S2 (689 aa).

The Zn(2+) site is built by H656, H681, and H685.

Belongs to the colicin/pyosin nuclease family. In terms of assembly, purified pyocin S2 makes up a complex of the two (large and small) proteins. The large protein, but not the pyocin complex, shows in vitro DNase activity.

In terms of biological role, causes breakdown of chromosomal DNA as well as complete inhibition of lipid synthesis in sensitive cells. The sequence is that of Pyocin-S2 (pys2) from Pseudomonas aeruginosa (strain ATCC 15692 / DSM 22644 / CIP 104116 / JCM 14847 / LMG 12228 / 1C / PRS 101 / PAO1).